Consider the following 450-residue polypeptide: Probable glycine dehydrogenase (decarboxylating) subunit 1 (450 aa).

This sequence belongs to the GcvP family. N-terminal subunit subfamily. In terms of assembly, the glycine cleavage system is composed of four proteins: P, T, L and H. In this organism, the P 'protein' is a heterodimer of two subunits.

It carries out the reaction N(6)-[(R)-lipoyl]-L-lysyl-[glycine-cleavage complex H protein] + glycine + H(+) = N(6)-[(R)-S(8)-aminomethyldihydrolipoyl]-L-lysyl-[glycine-cleavage complex H protein] + CO2. Its function is as follows. The glycine cleavage system catalyzes the degradation of glycine. The P protein binds the alpha-amino group of glycine through its pyridoxal phosphate cofactor; CO(2) is released and the remaining methylamine moiety is then transferred to the lipoamide cofactor of the H protein. The protein is Probable glycine dehydrogenase (decarboxylating) subunit 1 of Staphylococcus haemolyticus (strain JCSC1435).